The sequence spans 167 residues: NADH-quinone oxidoreductase subunit B (167 aa).

Positions 48, 49, 113, and 143 each coordinate [4Fe-4S] cluster.

The protein belongs to the complex I 20 kDa subunit family. As to quaternary structure, NDH-1 is composed of 14 different subunits. Subunits NuoB, C, D, E, F, and G constitute the peripheral sector of the complex. [4Fe-4S] cluster serves as cofactor.

It is found in the cell membrane. The enzyme catalyses a quinone + NADH + 5 H(+)(in) = a quinol + NAD(+) + 4 H(+)(out). NDH-1 shuttles electrons from NADH, via FMN and iron-sulfur (Fe-S) centers, to quinones in the respiratory chain. Couples the redox reaction to proton translocation (for every two electrons transferred, four hydrogen ions are translocated across the cytoplasmic membrane), and thus conserves the redox energy in a proton gradient. This is NADH-quinone oxidoreductase subunit B from Wolbachia pipientis subsp. Culex pipiens (strain wPip).